Here is a 170-residue protein sequence, read N- to C-terminus: Urease accessory protein UreE (170 aa).

Belongs to the UreE family.

It localises to the cytoplasm. In terms of biological role, involved in urease metallocenter assembly. Binds nickel. Probably functions as a nickel donor during metallocenter assembly. The sequence is that of Urease accessory protein UreE from Helicobacter pylori (strain ATCC 700392 / 26695) (Campylobacter pylori).